Reading from the N-terminus, the 278-residue chain is Putative phosphatase MG265 (278 aa).

D9 serves as the catalytic Nucleophile. D9 is a binding site for Mg(2+). Residue L10 participates in phosphate binding. D11 is a binding site for Mg(2+). Phosphate is bound by residues 43 to 44 and K204; that span reads SG. Mg(2+) is bound at residue D227. N230 provides a ligand contact to phosphate.

It belongs to the HAD-like hydrolase superfamily. Cof family. Mg(2+) serves as cofactor.

The sequence is that of Putative phosphatase MG265 from Mycoplasma genitalium (strain ATCC 33530 / DSM 19775 / NCTC 10195 / G37) (Mycoplasmoides genitalium).